A 333-amino-acid polypeptide reads, in one-letter code: Holliday junction branch migration complex subunit RuvB (333 aa).

The tract at residues 1–182 (MDERLLSGES…FGVLSRLEYY (182 aa)) is large ATPase domain (RuvB-L). ATP contacts are provided by residues Leu-21, Arg-22, Gly-63, Lys-66, Thr-67, Thr-68, 129 to 131 (EDF), Arg-172, Tyr-182, and Arg-219. Thr-67 provides a ligand contact to Mg(2+). Residues 183–253 (TVDQLSEIVE…ITQMALELLQ (71 aa)) are small ATPAse domain (RuvB-S). The segment at 256–333 (KLGLDHIDHK…EHFGMEMPKV (78 aa)) is head domain (RuvB-H). Residues Arg-311 and Arg-316 each coordinate DNA.

This sequence belongs to the RuvB family. Homohexamer. Forms an RuvA(8)-RuvB(12)-Holliday junction (HJ) complex. HJ DNA is sandwiched between 2 RuvA tetramers; dsDNA enters through RuvA and exits via RuvB. An RuvB hexamer assembles on each DNA strand where it exits the tetramer. Each RuvB hexamer is contacted by two RuvA subunits (via domain III) on 2 adjacent RuvB subunits; this complex drives branch migration. In the full resolvosome a probable DNA-RuvA(4)-RuvB(12)-RuvC(2) complex forms which resolves the HJ.

The protein localises to the cytoplasm. It catalyses the reaction ATP + H2O = ADP + phosphate + H(+). The RuvA-RuvB-RuvC complex processes Holliday junction (HJ) DNA during genetic recombination and DNA repair, while the RuvA-RuvB complex plays an important role in the rescue of blocked DNA replication forks via replication fork reversal (RFR). RuvA specifically binds to HJ cruciform DNA, conferring on it an open structure. The RuvB hexamer acts as an ATP-dependent pump, pulling dsDNA into and through the RuvAB complex. RuvB forms 2 homohexamers on either side of HJ DNA bound by 1 or 2 RuvA tetramers; 4 subunits per hexamer contact DNA at a time. Coordinated motions by a converter formed by DNA-disengaged RuvB subunits stimulates ATP hydrolysis and nucleotide exchange. Immobilization of the converter enables RuvB to convert the ATP-contained energy into a lever motion, pulling 2 nucleotides of DNA out of the RuvA tetramer per ATP hydrolyzed, thus driving DNA branch migration. The RuvB motors rotate together with the DNA substrate, which together with the progressing nucleotide cycle form the mechanistic basis for DNA recombination by continuous HJ branch migration. Branch migration allows RuvC to scan DNA until it finds its consensus sequence, where it cleaves and resolves cruciform DNA. This is Holliday junction branch migration complex subunit RuvB from Bacillus cereus (strain ATCC 10987 / NRS 248).